The sequence spans 196 residues: GTP cyclohydrolase 1 (196 aa).

The Zn(2+) site is built by cysteine 86, histidine 89, and cysteine 158.

Belongs to the GTP cyclohydrolase I family. As to quaternary structure, toroid-shaped homodecamer, composed of two pentamers of five dimers.

The enzyme catalyses GTP + H2O = 7,8-dihydroneopterin 3'-triphosphate + formate + H(+). The protein operates within cofactor biosynthesis; 7,8-dihydroneopterin triphosphate biosynthesis; 7,8-dihydroneopterin triphosphate from GTP: step 1/1. This chain is GTP cyclohydrolase 1, found in Clostridium botulinum (strain Langeland / NCTC 10281 / Type F).